The primary structure comprises 352 residues: tRNA uridine(34) hydroxylase (352 aa).

Residues 146-240 (DNPDTLFVDM…YARKAREQGL (95 aa)) form the Rhodanese domain. Cys-200 acts as the Cysteine persulfide intermediate in catalysis. Residues 315-328 (ETEQRARRAGRENG) are compositionally biased toward basic and acidic residues. The tract at residues 315–352 (ETEQRARRAGRENGAKIFNKSRHRLQDGLNSTSLQSVE) is disordered. The span at 342–352 (GLNSTSLQSVE) shows a compositional bias: polar residues.

Belongs to the TrhO family.

The enzyme catalyses uridine(34) in tRNA + AH2 + O2 = 5-hydroxyuridine(34) in tRNA + A + H2O. Catalyzes oxygen-dependent 5-hydroxyuridine (ho5U) modification at position 34 in tRNAs. This Photorhabdus laumondii subsp. laumondii (strain DSM 15139 / CIP 105565 / TT01) (Photorhabdus luminescens subsp. laumondii) protein is tRNA uridine(34) hydroxylase.